A 283-amino-acid polypeptide reads, in one-letter code: Adenylate kinase 2, chloroplastic (283 aa).

The N-terminal 59 residues, 1 to 59 (MTGCVNSISPPPVTLYRHRASPSRSSFSLSGDALHSLYRHRRVSRSPSIIAPKFQIVAA), are a transit peptide targeting the chloroplast. 74 to 79 (ASGKGT) contacts ATP. The interval 94-123 (SAGDLLRAEIASGSENGRRAKEHMEKGQLV) is NMP. AMP is bound by residues R100, 121 to 123 (QLV), 150 to 153 (GYPR), and Q157. The segment at 187–220 (GRRLDPVTGKIYHLKYSPPETEEIAVRLTQRFDD) is LID. R188 is a binding site for ATP. The AMP site is built by R217 and R228.

The protein belongs to the adenylate kinase family. As to quaternary structure, monomer.

Its subcellular location is the plastid. The protein resides in the chloroplast stroma. It carries out the reaction AMP + ATP = 2 ADP. Its function is as follows. Catalyzes the reversible transfer of the terminal phosphate group between ATP and AMP. Plays an important role in cellular energy homeostasis and in adenine nucleotide metabolism. Plays a major role in the equilibration of adenylates and de novo synthesis of ADP in the plastid stroma. This Arabidopsis thaliana (Mouse-ear cress) protein is Adenylate kinase 2, chloroplastic.